A 209-amino-acid chain; its full sequence is Octanoyltransferase (209 aa).

A BPL/LPL catalytic domain is found at 30 to 209; sequence DHEPEIIYLV…IQTEFNKIFK (180 aa). Substrate is bound by residues 69-76, 143-145, and 156-158; these read RGGKFTFH, AIG, and GVA. Residue Cys-174 is the Acyl-thioester intermediate of the active site.

This sequence belongs to the LipB family.

The protein localises to the cytoplasm. The enzyme catalyses octanoyl-[ACP] + L-lysyl-[protein] = N(6)-octanoyl-L-lysyl-[protein] + holo-[ACP] + H(+). It functions in the pathway protein modification; protein lipoylation via endogenous pathway; protein N(6)-(lipoyl)lysine from octanoyl-[acyl-carrier-protein]: step 1/2. Catalyzes the transfer of endogenously produced octanoic acid from octanoyl-acyl-carrier-protein onto the lipoyl domains of lipoate-dependent enzymes. Lipoyl-ACP can also act as a substrate although octanoyl-ACP is likely to be the physiological substrate. The protein is Octanoyltransferase of Rickettsia rickettsii (strain Iowa).